The primary structure comprises 203 residues: MIGKLSGKIDAQGDDYIIIDVNGVGYLVYASGKTLGKLSEGEFYKLFIETHVREEHIHLYGFLTIEEKNFFNLLQSVNGIGTRMALSILSNLTPTDIQIAINNEDKDIFKAISGVGAKLAERIVLELKGKVAKISTGAAIINDSLNIKNITSVASNEVIKALVNLGFSRFEAQNSVQGIVIQNPEISIDELIKTALKNRNAGL.

The domain I stretch occupies residues 1-63 (MIGKLSGKID…EEHIHLYGFL (63 aa)). Positions 64-142 (TIEEKNFFNL…KISTGAAIIN (79 aa)) are domain II. The tract at residues 143–149 (DSLNIKN) is flexible linker. Residues 150–203 (ITSVASNEVIKALVNLGFSRFEAQNSVQGIVIQNPEISIDELIKTALKNRNAGL) are domain III.

The protein belongs to the RuvA family. As to quaternary structure, homotetramer. Forms an RuvA(8)-RuvB(12)-Holliday junction (HJ) complex. HJ DNA is sandwiched between 2 RuvA tetramers; dsDNA enters through RuvA and exits via RuvB. An RuvB hexamer assembles on each DNA strand where it exits the tetramer. Each RuvB hexamer is contacted by two RuvA subunits (via domain III) on 2 adjacent RuvB subunits; this complex drives branch migration. In the full resolvosome a probable DNA-RuvA(4)-RuvB(12)-RuvC(2) complex forms which resolves the HJ.

It is found in the cytoplasm. In terms of biological role, the RuvA-RuvB-RuvC complex processes Holliday junction (HJ) DNA during genetic recombination and DNA repair, while the RuvA-RuvB complex plays an important role in the rescue of blocked DNA replication forks via replication fork reversal (RFR). RuvA specifically binds to HJ cruciform DNA, conferring on it an open structure. The RuvB hexamer acts as an ATP-dependent pump, pulling dsDNA into and through the RuvAB complex. HJ branch migration allows RuvC to scan DNA until it finds its consensus sequence, where it cleaves and resolves the cruciform DNA. This Rickettsia akari (strain Hartford) protein is Holliday junction branch migration complex subunit RuvA.